The sequence spans 473 residues: Photosystem II CP43 reaction center protein (473 aa).

A propeptide spanning residues 1 to 14 (MKILYSLRRFYHVE) is cleaved from the precursor. Thr15 is modified (N-acetylthreonine). Thr15 carries the phosphothreonine modification. 5 helical membrane-spanning segments follow: residues 69–93 (LFEVAHFVPEKPMYEQGLILLPHLA), 134–155 (LLGPETLEESFPFFGYVWKDRN), 178–200 (KALYFGGIYDTWAPGGGDVRKIT), 255–275 (KPFAWARRAFVWSGEAYLSYS), and 291–312 (WFNNTAYPSEFYGPTGPEASQA). Glu367 serves as a coordination point for [CaMn4O5] cluster. A helical membrane pass occupies residues 447–471 (RARAAAAGFEKGIDRDLEPVLYMTP).

Belongs to the PsbB/PsbC family. PsbC subfamily. As to quaternary structure, PSII is composed of 1 copy each of membrane proteins PsbA, PsbB, PsbC, PsbD, PsbE, PsbF, PsbH, PsbI, PsbJ, PsbK, PsbL, PsbM, PsbT, PsbX, PsbY, PsbZ, Psb30/Ycf12, at least 3 peripheral proteins of the oxygen-evolving complex and a large number of cofactors. It forms dimeric complexes. It depends on Binds multiple chlorophylls and provides some of the ligands for the Ca-4Mn-5O cluster of the oxygen-evolving complex. It may also provide a ligand for a Cl- that is required for oxygen evolution. PSII binds additional chlorophylls, carotenoids and specific lipids. as a cofactor.

It is found in the plastid. The protein resides in the chloroplast thylakoid membrane. One of the components of the core complex of photosystem II (PSII). It binds chlorophyll and helps catalyze the primary light-induced photochemical processes of PSII. PSII is a light-driven water:plastoquinone oxidoreductase, using light energy to abstract electrons from H(2)O, generating O(2) and a proton gradient subsequently used for ATP formation. The protein is Photosystem II CP43 reaction center protein of Oryza nivara (Indian wild rice).